Here is a 118-residue protein sequence, read N- to C-terminus: MSYRQMLIHRCDIYHEAAQAPSAGRFGIPADRLQPVISYPDTPDEQDVPCYFTEKTQQLIQEEPDQTVYHSFLVHFPLSADIRVNDKIIWENHKYILKLPKRIRHHHWEVVAVRDESL.

It to B.subtilis YqbH.

This Bacillus subtilis (strain 168) protein is Phage-like element PBSX protein XkdH (xkdH).